Here is a 113-residue protein sequence, read N- to C-terminus: Putative pterin-4-alpha-carbinolamine dehydratase (113 aa).

This sequence belongs to the pterin-4-alpha-carbinolamine dehydratase family.

It catalyses the reaction (4aS,6R)-4a-hydroxy-L-erythro-5,6,7,8-tetrahydrobiopterin = (6R)-L-erythro-6,7-dihydrobiopterin + H2O. In Rickettsia bellii (strain OSU 85-389), this protein is Putative pterin-4-alpha-carbinolamine dehydratase.